A 363-amino-acid polypeptide reads, in one-letter code: MILTRIILHNYRNIEAAELCPEENFNLLCGDNAQGKTNTLEAIYLLGHFKSFRRGRNEELIGSADRHTRVQGEFLRDGLRETVSITITGDKKNIEINGKRPRQSNEMFGRFPSVLFAPEEVSLPKGFPAGRRALLDRALCQTRPSFLDHARAYQRCLRQRNILLKSGAAAPIVLPWTEELIQTGAMVRLARRRYLDRLLPLLRDIYREICSGRESVNLVYPSESDNLSDLKEELRSNLEREQSRETKYGMTMVGPHRDDPVFMVDDRVLGLYGSQGQQRSFILAFKTAQIIDLEKETGYTPLLLLDDMTSELDRKRQDYFFRFLHQRQGQVFITCTELSPLQNAGFNRMRTFRVREGKLCDYQ.

Residue 30–37 (GDNAQGKT) participates in ATP binding.

The protein belongs to the RecF family.

It localises to the cytoplasm. Its function is as follows. The RecF protein is involved in DNA metabolism; it is required for DNA replication and normal SOS inducibility. RecF binds preferentially to single-stranded, linear DNA. It also seems to bind ATP. The protein is DNA replication and repair protein RecF of Syntrophotalea carbinolica (strain DSM 2380 / NBRC 103641 / GraBd1) (Pelobacter carbinolicus).